The primary structure comprises 625 residues: MNAAPTVLQQQAQSLSEAVTQPIPGSRKIFVQGSRADLQVPMREIALTRTPTLFGGEENPPLSVYDTSGPYTDPQVAIDLAVGLAPLRAHWIAERGDTVALDGLSSSFGRGREHDARLDAVRFPARRLPRVAREGANVTQMHYARRGIITPEMEYVAIRENQRLEAVTDASLRKQHPGEAFGASIQQRITPEFVREEIARGRAILPNNINHPESEPMIIGRNFLTKINANIGNSAVSSGIAEEVEKLVWSIRWGGDTVMDLSTGKHIHETREWIIRNSPVPIGTVPIYQALEKVDGRAEALTWEIFRDTLIEQAEQGVDYFTIHAGVLLRYVPLTAKRVTGIVSRGGSIMAKWCLAHHKENFLYTHFEDICQIMKAYDVAFSLGDGLRPGCIADANDAAQFGELETLGELTKLAWKHDVQTMIEGPGHVPMQLIKENMDKQLRECGEAPFYTLGPLTTDIAPGYDHITSAIGAAMIGWFGTAMLCYVTPKEHLGLPNRQDVRDGIMAYKIAAHAADLAKGHPGAQVRDNALSKARFEFRWDDQFHLGLDPEKAKEFHDETLPKDAHKLAHFCSMCGPHFCSMKITQDVRDYAAEHGMDDAQALSTGMQEKSAQFLAQGAQVYRPM.

Substrate contacts are provided by residues Asn-230, Met-259, Tyr-288, His-324, 344 to 346 (SRG), 385 to 388 (DGLR), and Glu-424. Residue His-428 participates in Zn(2+) binding. Tyr-451 lines the substrate pocket. Zn(2+) is bound at residue His-492. Positions 572, 575, and 580 each coordinate [4Fe-4S] cluster.

This sequence belongs to the ThiC family. Homodimer. The cofactor is [4Fe-4S] cluster.

It carries out the reaction 5-amino-1-(5-phospho-beta-D-ribosyl)imidazole + S-adenosyl-L-methionine = 4-amino-2-methyl-5-(phosphooxymethyl)pyrimidine + CO + 5'-deoxyadenosine + formate + L-methionine + 3 H(+). It functions in the pathway cofactor biosynthesis; thiamine diphosphate biosynthesis. In terms of biological role, catalyzes the synthesis of the hydroxymethylpyrimidine phosphate (HMP-P) moiety of thiamine from aminoimidazole ribotide (AIR) in a radical S-adenosyl-L-methionine (SAM)-dependent reaction. The sequence is that of Phosphomethylpyrimidine synthase from Xanthomonas oryzae pv. oryzae (strain MAFF 311018).